We begin with the raw amino-acid sequence, 228 residues long: Probable septum site-determining protein MinC (228 aa).

Belongs to the MinC family. As to quaternary structure, interacts with MinD and FtsZ.

Its function is as follows. Cell division inhibitor that blocks the formation of polar Z ring septums. Rapidly oscillates between the poles of the cell to destabilize FtsZ filaments that have formed before they mature into polar Z rings. Prevents FtsZ polymerization. This is Probable septum site-determining protein MinC from Bacillus cereus (strain B4264).